We begin with the raw amino-acid sequence, 1584 residues long: Kinesin-like protein unc-104 (1584 aa).

In terms of domain architecture, Kinesin motor spans 3–347 (SVKVAVRVRP…LRYADRAKQI (345 aa)). 93–100 (GQTGSGKS) lines the ATP pocket. The microtubule-binding stretch occupies residues 183–335 (VCSYHDICNL…PADINFDETL (153 aa)). Coiled-coil stretches lie at residues 425–445 (EQKLIHTEEIRKQREEELRDM), 598–652 (IDLK…SYIS), and 777–797 (SIEKLKQRLEAMRDMYETDAE). The disordered stretch occupies residues 1366-1416 (IPMNKDPPTGNKAQELSDESGSNSITSPVSDKSLIKSSRSSDLLCRQKSKS). A compositionally biased stretch (polar residues) spans 1376-1394 (NKAQELSDESGSNSITSPV). Positions 1395 to 1409 (SDKSLIKSSRSSDLL) are enriched in low complexity. The region spanning 1460–1558 (VVSKKGYMNF…WLYAINPLMA (99 aa)) is the PH domain.

Belongs to the TRAFAC class myosin-kinesin ATPase superfamily. Kinesin family. Unc-104 subfamily. As to quaternary structure, interacts with casy-1. As to expression, expressed in nerve ring, amphid commissure and ventral nerve cord (at protein level).

The protein localises to the cytoplasm. Its subcellular location is the cytoskeleton. It localises to the cell projection. The protein resides in the axon. Functionally, motor protein involved in microtubule-associated anterograde transport. Regulates the transport of synaptic vesicle precursors in the axon of DA motor neurons. Regulates the polarized sorting of axonal proteins. Essential for the transport of synaptic components during the synaptic remodeling of the DD motor neuron, probably downstream of cdk-5 and/or pct-1/cyy-1 complex. Required for the anterograde transport of neuropeptide-containing dense core vesicles along axons. Involved in necrotic cell death. This chain is Kinesin-like protein unc-104 (unc-104), found in Caenorhabditis elegans.